The sequence spans 296 residues: Acetylglutamate kinase (296 aa).

Substrate is bound by residues 68–69 (GG), Arg-90, and Asn-193.

This sequence belongs to the acetylglutamate kinase family. ArgB subfamily.

It is found in the cytoplasm. It catalyses the reaction N-acetyl-L-glutamate + ATP = N-acetyl-L-glutamyl 5-phosphate + ADP. It functions in the pathway amino-acid biosynthesis; L-arginine biosynthesis; N(2)-acetyl-L-ornithine from L-glutamate: step 2/4. In terms of biological role, catalyzes the ATP-dependent phosphorylation of N-acetyl-L-glutamate. This is Acetylglutamate kinase from Acidothermus cellulolyticus (strain ATCC 43068 / DSM 8971 / 11B).